A 465-amino-acid chain; its full sequence is uncharacterized protein (465 aa).

A helical membrane pass occupies residues 56–76 (ILYMIIFAIFGLLPFLIALIF). Residues 177–198 (KFNKSKKSNKINDKTPILNNNN) are disordered. The chain crosses the membrane as a helical span at residues 273-293 (LIFLLVSTILLIALIGFILII). A disordered region spans residues 411-449 (NNYNNSNNNNNSNNSNSNNNNNNNNNNNNYNNNNYNNNN).

It localises to the membrane. This is an uncharacterized protein from Dictyostelium discoideum (Social amoeba).